A 56-amino-acid chain; its full sequence is uncharacterized protein (56 aa).

This is an uncharacterized protein from Schizosaccharomyces pombe (strain 972 / ATCC 24843) (Fission yeast).